Reading from the N-terminus, the 902-residue chain is Nuclear factor of activated T-cells, cytoplasmic 4 (902 aa).

2 disordered regions span residues 16–180 and 208–369; these read VFGE…SSWS and RFGL…GGSR. Residues 50–81 are compositionally biased toward pro residues; that stretch reads EPPPYGAAPIGIPRPPPPRPGMHSPPPRPAPS. Residues 96 to 109 show a composition bias toward gly residues; that stretch reads GGPGGGAGGAGGGR. Positions 114–119 are calcineurin-binding; that stretch reads PSIRIT. Over residues 151–165 the composition is skewed to gly residues; it reads GFGGYREAGGQGGGA. Residues 166–180 are compositionally biased toward low complexity; the sequence is FFSPSPGSSSLSSWS. Phosphoserine; by MAPK7 and MAPK14 is present on residues serine 168 and serine 170. Phosphoserine; by MAPK8 and MAPK9 is present on residues serine 213 and serine 217. One copy of the SP 1 repeat lies at 213-229; sequence SPLPSPRASPRPWTPED. The segment at 213–293 is 2 approximate SP repeats; the sequence is SPLPSPRASP…LSRRGSLGEE (81 aa). Composition is skewed to pro residues over residues 215-227 and 254-263; these read LPSP…PWTP and GPTPASPRPA. Positions 268–270 match the Nuclear localization signal motif; the sequence is KRR. Positions 272–288 are enriched in low complexity; sequence SSSGTPSSASPALSRRG. The stretch at 277–293 is one SP 2; approximate repeat; the sequence is PSSASPALSRRGSLGEE. Phosphoserine; by RPS6KA3 is present on residues serine 289 and serine 344. An RHD domain is found at 401–582; that stretch reads SALPPLDWPL…VPIECSQRSA (182 aa). A DNA-binding region spans residues 430 to 437; sequence RAHYETEG. In terms of domain architecture, IPT/TIG spans 586 to 683; that stretch reads PQVEAYSPSA…KRSPTQSFRF (98 aa). The Nuclear localization signal motif lies at 672–674; it reads RRK. A Glycyl lysine isopeptide (Lys-Gly) (interchain with G-Cter in SUMO2) cross-link involves residue lysine 689. The interval 791–870 is disordered; that stretch reads PYGGRGSSFS…GGYSSGFRDS (80 aa). Residues 805–824 show a composition bias toward pro residues; the sequence is FSPPAPFRPPPLPASPPLEG.

In terms of assembly, member of the multicomponent NFATC transcription complex that consists of at least two components, a pre-existing cytoplasmic component NFATC2 and an inducible nuclear component NFATC1. Other NFAT proteins, such as NFATC3, or members of the activating protein-1 (AP-1) family and MAF can also bind the complex. NFAT proteins can bind DNA as monomers or dimers. Component of a promoter-binding complex composed of STAT3, NFATC3 and NFATC4; complex formation is enhanced by calcineurin. Interacts with CREBBP; this interaction potentiates transcription activation. Interacts with MAPK8/JNK1 and MAPK9/JNK2. Interacts with GATA4 (via the second Zn finger). Interacts (via N-terminus) with IRAK1 (via C-terminus). Interacts with RPS6KA3. Interacts with HOMER1, HOMER2 and HOMER3; this interaction competes with calcineurin/PPP3CA-binding and hence prevents NFATC4 dephosphorylation and activation. Interacts with ESR1 and ESR2; this interaction decreases NFATC4 transcriptional activity. Interacts with MTOR and MAPK7/ERK5. Interacts with TRIM17; this interaction prevents NFATC3 nuclear localization. Interacts with TCF25 (via C-terminus); the interaction leads to suppression of NFATC4 transcription factor activity and is reduced following stimulation with angiotensin-2. Post-translationally, phosphorylated by NFATC-kinases; dephosphorylated by calcineurin/PPP3CA. Phosphorylated on Ser-168 and Ser-170 by MTOR, IRAK1, MAPK7/ERK5 and MAPK14/p38, on Ser-213 and Ser-217 by MAPK8/JNK1 and MAPK9/JNK2, and on Ser-289 and Ser-344 by RPS6KA3. Phosphorylated by GSK3B. Phosphorylation by GSK3B markedly increases NFATC4 ubiquitination. Phosphorylation at Ser-168 and Ser-170 is stimulated by UV irradiation. Phosphorylation determines subcellular location: the hyperphosphorylated protein is cytosolic, while the dephosphorylated form is targeted to the nucleus. Ubiquitinated, leading to degradation by the proteasome. Ubiquitination may be stimulated by GSK3B-dependent phosphorylation. Polyubiquitin linkage mainly occurs through 'Lys-48'. In terms of tissue distribution, widely expressed, with high levels in placenta, lung, kidney, testis and ovary. Weakly expressed in spleen and thymus. In the hippocampus, expressed in the granular layer of the dentate gyrus, in the pyramidal neurons of CA3 region, and in the hippocampal fissure. Expressed in the heart (at protein level).

It localises to the cytoplasm. It is found in the nucleus. Transcriptional activity may be repressed by ESR1 and ESR2. In terms of biological role, ca(2+)-regulated transcription factor that is involved in several processes, including the development and function of the immune, cardiovascular, musculoskeletal, and nervous systems. Involved in T-cell activation, stimulating the transcription of cytokine genes, including that of IL2 and IL4. Along with NFATC3, involved in embryonic heart development. Following JAK/STAT signaling activation and as part of a complex with NFATC3 and STAT3, binds to the alpha-beta E4 promoter region of CRYAB and activates transcription in cardiomyocytes. Involved in mitochondrial energy metabolism required for cardiac morphogenesis and function. Transactivates many genes involved in the cardiovascular system, including AGTR2, NPPB/BNP (in synergy with GATA4), NPPA/ANP/ANF and MYH7/beta-MHC. Involved in the regulation of adult hippocampal neurogenesis. Involved in BDNF-driven pro-survival signaling in hippocampal adult-born neurons. Involved in the formation of long-term spatial memory and long-term potentiation. In cochlear nucleus neurons, may play a role in deafferentation-induced apoptosis during the developmental critical period, when auditory neurons depend on afferent input for survival. Binds to and activates the BACE1/Beta-secretase 1 promoter, hence may regulate the proteolytic processing of the amyloid precursor protein (APP). Plays a role in adipocyte differentiation. May be involved in myoblast differentiation into myotubes. Binds the consensus DNA sequence 5'-GGAAAAT-3'. In the presence of CREBBP, activates TNF transcription. Binds to PPARG gene promoter and regulates its activity. Binds to PPARG and REG3G gene promoters. This chain is Nuclear factor of activated T-cells, cytoplasmic 4 (NFATC4), found in Homo sapiens (Human).